Reading from the N-terminus, the 234-residue chain is Preflagellin peptidase (234 aa).

A topological domain (cytoplasmic) is located at residue Met-1. A helical membrane pass occupies residues 2–18 (INFIVGAIGLLIASIYD). Residues 19–23 (LKSRE) are Extracellular-facing. The helical transmembrane segment at 24–46 (IEDYVWVSMVIFGLIYNGYLSFI) threads the bilayer. The Cytoplasmic segment spans residues 47–49 (SHD). A helical membrane pass occupies residues 50–72 (MLYVIQSIVGFIVCFFLGFFMFL). The Extracellular segment spans residues 73–78 (LGVGGG). The chain crosses the membrane as a helical span at residues 79–89 (DGKLIMGLGAL). Residues 90 to 110 (IPKYNMPIHTPLGAILNYLYL) are Cytoplasmic-facing. The helical transmembrane segment at 111–139 (PSFPIMVVINAMFFSITLPIIIFLRNVIR) threads the bilayer. Over 140–205 (GVKPKTKKEV…EEIWVTPAIP (66 aa)) the chain is Extracellular. The helical transmembrane segment at 206–217 (FVVPIFLSYLLT) threads the bilayer. Over 218–234 (SIIGDKIIGIFLSVFGL) the chain is Cytoplasmic.

This sequence belongs to the peptidase A24 family. Archaeal preflagellin peptidase subfamily.

It is found in the cell membrane. The enzyme catalyses Cleaves the signal peptide of 3 to 12 amino acids from the N-terminal of preflagellin, usually at Arg-Gly-|- or Lys-Gly-|-, to release flagellin.. Functionally, cleaves the N-terminal leader peptide from preflagellins. The sequence is that of Preflagellin peptidase (flaK) from Methanocaldococcus jannaschii (strain ATCC 43067 / DSM 2661 / JAL-1 / JCM 10045 / NBRC 100440) (Methanococcus jannaschii).